Here is a 607-residue protein sequence, read N- to C-terminus: CRS2-associated factor 2, chloroplastic (607 aa).

The disordered stretch occupies residues Met1–Ala75. Residues Met1 to Arg79 constitute a chloroplast transit peptide. CRM domains lie at Glu228–Arg324 and Glu346–Pro442. Residues Lys482 to Asp505 form a CRS2 binding region. Residues Thr550–Asp576 are disordered.

As to quaternary structure, interacts with CRS2 and RNA. Part of large ribonucleo-protein complexes that include group IIB introns, CRS2 and CAF2.

The protein localises to the plastid. The protein resides in the chloroplast stroma. In terms of biological role, required for the splicing of group IIB introns in chloroplasts. Forms splicing particles with CRS2. Interacts with RNA and confers intron specificity of the splicing particles. The chain is CRS2-associated factor 2, chloroplastic from Oryza sativa subsp. japonica (Rice).